We begin with the raw amino-acid sequence, 300 residues long: MFRNVKELIEITKEKQILISDVMIAQEMEVTEKTKEDIFQQMDHNLSVMEAAVQKGLEGVTSQTGLTGGDAVKLQAYIRSGKSLSGPLILDAVSKAVATNEVNAAMGTICATPTAGSAGVVPGTLFAVKEKLNPTREQMIRFLFTAGAFGFVVANNASISGAAGGCQAEVGSASGMAAAAIVEMAGGTPEQSAEAMAITLKNMLGLVCDPVAGLVEVPCVKRNAMGASNAMIAADMALAGITSRIPCDEVIDAMYKIGQTMPTALRETGQGGLAATPTGRELEKKIFGGALGSRETTSAN.

Belongs to the iron-sulfur dependent L-serine dehydratase family. As to quaternary structure, heterodimer of an alpha chain and a beta chain. [4Fe-4S] cluster is required as a cofactor.

It catalyses the reaction L-serine = pyruvate + NH4(+). Its pathway is carbohydrate biosynthesis; gluconeogenesis. The chain is Probable L-serine dehydratase, alpha chain (sdaAA) from Bacillus subtilis (strain 168).